Consider the following 85-residue polypeptide: U4-theraphotoxin-Hhn1a (85 aa).

Positions 1–22 are cleaved as a signal peptide; sequence MKMTLIAILTCAAVLVLHTTAA. Positions 23–48 are excised as a propeptide; it reads EELEAESQLMEVGMPDTELAAVDEER. 3 cysteine pairs are disulfide-bonded: C52–C66, C56–C77, and C71–C82.

Belongs to the neurotoxin 12 (Hwtx-2) family. 02 (Hwtx-2) subfamily. In terms of assembly, monomer. In terms of tissue distribution, expressed by the venom gland.

It is found in the secreted. Neurotoxin active on both insects and mammals. The chain is U4-theraphotoxin-Hhn1a from Cyriopagopus hainanus (Chinese bird spider).